Consider the following 244-residue polypeptide: MILRVEGLKKVYPDGTVGIKEINTSIRRGELISVIGPSGAGKSTFLRSINRLVEPTSGAIFVEGENICNARGKKLRQMRRKIGMVFQHYNLIKRSSVLQNVLHGRLGYMSTIKGGLGRFHESDTKRALSILKRVGLEEQALKRADELSGGQQQRVGIARAIAQNPTLILADEPIASLDPTASENVLHYMKTICQEEGITTVVNLHQVEFAKKFADRMIGIKAGKIVFDGTPRELTDYTVDQLYQ.

Positions 3–242 (LRVEGLKKVY…ELTDYTVDQL (240 aa)) constitute an ABC transporter domain. 36–43 (GPSGAGKS) contacts ATP.

Belongs to the ABC transporter superfamily. Phosphonates importer (TC 3.A.1.9.1) family. As to quaternary structure, the complex is composed of two ATP-binding proteins (PhnC), two transmembrane proteins (PhnE) and a solute-binding protein (PhnD).

Its subcellular location is the cell membrane. It carries out the reaction phosphonate(out) + ATP + H2O = phosphonate(in) + ADP + phosphate + H(+). Its function is as follows. Part of the ABC transporter complex PhnCDE involved in phosphonates import. Responsible for energy coupling to the transport system. In Halalkalibacterium halodurans (strain ATCC BAA-125 / DSM 18197 / FERM 7344 / JCM 9153 / C-125) (Bacillus halodurans), this protein is Phosphonates import ATP-binding protein PhnC 2.